The sequence spans 481 residues: Cytochrome P450 monooygenase 2 (481 aa).

Residues 12-32 (GSQLLPFYIAIFVFTLVPWAI) form a helical membrane-spanning segment. C418 is a binding site for heme.

This sequence belongs to the cytochrome P450 family. The cofactor is heme.

It is found in the membrane. The protein operates within plant hormone biosynthesis; gibberellin biosynthesis. Gibberellin 20-oxidase; part of the gene cluster that mediates the biosynthesis of gibberellins (GAs), diterpenoids that may provide a selective advantage during infection of the preferred host plant, rice. Gibberellins (GAs) are diterpenoids and are synthesized via the mevalonate pathway. Biosynthesis of the major metabolite GA3 (gibberellic acid) from geranylgeranyl diphosphate (GGPP) requires 13 steps. The GGPP produced by the geranylgeranyl diphosphate synthase GGS2 is converted to ent-kaurene via ent-copalyldiphosphate in a two-step cyclization reaction performed by the bifunctional ent-copalyl diphosphate synthase/ent-kaurene synthase enzyme (CPS/KS). Ent-Kaurene is metabolized to GAs by a series of oxidation reactions catalyzed by cytochrome P450 monooxygenases. Cytochrome P450 monooxygenase P450-4 is an ent-kaurene oxidase that catalyzes the three oxidation steps between ent-kaurene and ent-kaurenoic acid. The highly multifunctional cytochrome P450 monooxygenase P450-1 then catalyzes four steps involving oxidation at two carbon atoms, in the main pathway from ent-kaurenoic acid to GA14 via GA12-aldehyde as well as producing kaurenolides and fujenoic acids as by-products. The cytochrome P450 monooxygenase P450-2 then converts GA14 to GA4 by removal of C-20. GA4 is further converted to GA7 by the GA4 desaturase DES via 1,2-desaturation before cytochrome P450 monooxygenase P450-3, a 13-hydroxylase, hydroxylates GA7 to GA3, the final product of the GA-biosynthetic pathway. The chain is Cytochrome P450 monooygenase 2 from Gibberella fujikuroi (strain CBS 195.34 / IMI 58289 / NRRL A-6831) (Bakanae and foot rot disease fungus).